The chain runs to 209 residues: 3-demethoxyubiquinol 3-hydroxylase (209 aa).

Positions 23–36 are enriched in low complexity; sequence PHATRAAPAPAQAP. A disordered region spans residues 23–42; the sequence is PHATRAAPAPAQAPGEMTDS. Residues Glu58, Glu88, His91, Glu140, Glu172, and His175 each contribute to the Fe cation site.

The protein belongs to the COQ7 family. The cofactor is Fe cation.

The protein localises to the cell membrane. It carries out the reaction a 5-methoxy-2-methyl-3-(all-trans-polyprenyl)benzene-1,4-diol + AH2 + O2 = a 3-demethylubiquinol + A + H2O. Its pathway is cofactor biosynthesis; ubiquinone biosynthesis. Catalyzes the hydroxylation of 2-nonaprenyl-3-methyl-6-methoxy-1,4-benzoquinol during ubiquinone biosynthesis. The chain is 3-demethoxyubiquinol 3-hydroxylase from Variovorax paradoxus (strain S110).